Consider the following 373-residue polypeptide: Dual-specificity RNA methyltransferase RlmN (373 aa).

The active-site Proton acceptor is Glu94. The Radical SAM core domain occupies 100–339; sequence EDDRATLCVS…VTIRKTRGDD (240 aa). Cys107 and Cys344 are joined by a disulfide. 3 residues coordinate [4Fe-4S] cluster: Cys114, Cys118, and Cys121. S-adenosyl-L-methionine is bound by residues 168–169, Ser200, 222–224, and Asn301; these read GE and SLH. The S-methylcysteine intermediate role is filled by Cys344.

It belongs to the radical SAM superfamily. RlmN family. The cofactor is [4Fe-4S] cluster.

It localises to the cytoplasm. The catalysed reaction is adenosine(2503) in 23S rRNA + 2 reduced [2Fe-2S]-[ferredoxin] + 2 S-adenosyl-L-methionine = 2-methyladenosine(2503) in 23S rRNA + 5'-deoxyadenosine + L-methionine + 2 oxidized [2Fe-2S]-[ferredoxin] + S-adenosyl-L-homocysteine. It catalyses the reaction adenosine(37) in tRNA + 2 reduced [2Fe-2S]-[ferredoxin] + 2 S-adenosyl-L-methionine = 2-methyladenosine(37) in tRNA + 5'-deoxyadenosine + L-methionine + 2 oxidized [2Fe-2S]-[ferredoxin] + S-adenosyl-L-homocysteine. Functionally, specifically methylates position 2 of adenine 2503 in 23S rRNA and position 2 of adenine 37 in tRNAs. m2A2503 modification seems to play a crucial role in the proofreading step occurring at the peptidyl transferase center and thus would serve to optimize ribosomal fidelity. In Vibrio cholerae serotype O1 (strain M66-2), this protein is Dual-specificity RNA methyltransferase RlmN.